We begin with the raw amino-acid sequence, 237 residues long: tRNA (guanine-N(7)-)-methyltransferase (237 aa).

The S-adenosyl-L-methionine site is built by D35, E60, N87, and D113. The active site involves D113. Substrate contacts are provided by K117 and D149.

The protein belongs to the class I-like SAM-binding methyltransferase superfamily. TrmB family.

It catalyses the reaction guanosine(46) in tRNA + S-adenosyl-L-methionine = N(7)-methylguanosine(46) in tRNA + S-adenosyl-L-homocysteine. The protein operates within tRNA modification; N(7)-methylguanine-tRNA biosynthesis. In terms of biological role, catalyzes the formation of N(7)-methylguanine at position 46 (m7G46) in tRNA. In Synechococcus sp. (strain CC9311), this protein is tRNA (guanine-N(7)-)-methyltransferase.